The chain runs to 264 residues: Small ribosomal subunit protein uS3 (264 aa).

Residues 39 to 107 form the KH type-2 domain; it reads VREYLKKKLK…PVHVNIEEIR (69 aa). The disordered stretch occupies residues 217–264; the sequence is EEVAEEKRPRRNARPGDRRPRRDGEGAPAGARRGAPRRGGAGDGKTGE. A compositionally biased stretch (basic and acidic residues) spans 230–241; sequence RPGDRRPRRDGE. The segment covering 253–264 has biased composition (gly residues); sequence RRGGAGDGKTGE.

Belongs to the universal ribosomal protein uS3 family. As to quaternary structure, part of the 30S ribosomal subunit. Forms a tight complex with proteins S10 and S14.

Binds the lower part of the 30S subunit head. Binds mRNA in the 70S ribosome, positioning it for translation. The sequence is that of Small ribosomal subunit protein uS3 from Paraburkholderia phymatum (strain DSM 17167 / CIP 108236 / LMG 21445 / STM815) (Burkholderia phymatum).